The chain runs to 21 residues: Complement receptor 3-related protein (21 aa).

Its subcellular location is the secreted. Its function is as follows. Plays a role in adherence of C.albicans to buccal epithelial cells, and in biofilm formation. The protein is Complement receptor 3-related protein of Candida albicans (Yeast).